The primary structure comprises 700 residues: Phosphoribosylformylglycinamidine synthase subunit PurL (700 aa).

The active site involves histidine 34. Tyrosine 37 serves as a coordination point for ATP. A Mg(2+)-binding site is contributed by glutamate 79. Substrate-binding positions include 80–83 and arginine 102; that span reads SHNH. The active-site Proton acceptor is the histidine 81. Aspartate 103 is a binding site for Mg(2+). Glutamine 227 serves as a coordination point for substrate. Mg(2+) is bound at residue aspartate 255. 299 to 301 contacts substrate; it reads ESQ. ATP is bound by residues aspartate 476 and glycine 513. Asparagine 514 is a binding site for Mg(2+). Serine 516 lines the substrate pocket.

It belongs to the FGAMS family. In terms of assembly, monomer. Part of the FGAM synthase complex composed of 1 PurL, 1 PurQ and 2 PurS subunits.

The protein localises to the cytoplasm. The enzyme catalyses N(2)-formyl-N(1)-(5-phospho-beta-D-ribosyl)glycinamide + L-glutamine + ATP + H2O = 2-formamido-N(1)-(5-O-phospho-beta-D-ribosyl)acetamidine + L-glutamate + ADP + phosphate + H(+). It functions in the pathway purine metabolism; IMP biosynthesis via de novo pathway; 5-amino-1-(5-phospho-D-ribosyl)imidazole from N(2)-formyl-N(1)-(5-phospho-D-ribosyl)glycinamide: step 1/2. Functionally, part of the phosphoribosylformylglycinamidine synthase complex involved in the purines biosynthetic pathway. Catalyzes the ATP-dependent conversion of formylglycinamide ribonucleotide (FGAR) and glutamine to yield formylglycinamidine ribonucleotide (FGAM) and glutamate. The FGAM synthase complex is composed of three subunits. PurQ produces an ammonia molecule by converting glutamine to glutamate. PurL transfers the ammonia molecule to FGAR to form FGAM in an ATP-dependent manner. PurS interacts with PurQ and PurL and is thought to assist in the transfer of the ammonia molecule from PurQ to PurL. This chain is Phosphoribosylformylglycinamidine synthase subunit PurL, found in Halobacterium salinarum (strain ATCC 29341 / DSM 671 / R1).